Reading from the N-terminus, the 308-residue chain is Cytochrome c biogenesis protein CcsA (308 aa).

A run of 7 helical transmembrane segments spans residues 17–37 (IISI…VGLC), 43–63 (GMIT…IYSG), 70–90 (LYES…VPYF), 142–162 (MLLS…LLVI), 213–233 (VIGL…VWAN), 246–260 (ETWA…AIYL), and 274–294 (AIVA…VNLL).

The protein belongs to the CcmF/CycK/Ccl1/NrfE/CcsA family. In terms of assembly, may interact with Ccs1.

The protein localises to the plastid. The protein resides in the chloroplast thylakoid membrane. Required during biogenesis of c-type cytochromes (cytochrome c6 and cytochrome f) at the step of heme attachment. The chain is Cytochrome c biogenesis protein CcsA from Nymphaea alba (White water-lily).